The sequence spans 588 residues: Pescadillo homolog (588 aa).

Residues methionine 1–valine 54 form a required for 28S ribosomal RNA processing region. Residues methionine 1–glutamate 257 are sufficient for nucleolar localization. Position 98 is an N6-acetyllysine (lysine 98). Residues glutamate 294–arginine 314 form a disordered region. Positions methionine 306–serine 415 are sufficient for interaction with MAP1B. The 94-residue stretch at lysine 322–serine 415 folds into the BRCT domain. Positions glycine 448–threonine 515 are disordered. The span at glutamate 456–alanine 486 shows a compositional bias: acidic residues. A compositionally biased stretch (basic and acidic residues) spans glycine 487–lysine 508. A Glycyl lysine isopeptide (Lys-Gly) (interchain with G-Cter in SUMO1); alternate cross-link involves residue lysine 517. Lysine 517 is covalently cross-linked (Glycyl lysine isopeptide (Lys-Gly) (interchain with G-Cter in SUMO2); alternate). The segment at methionine 539–glutamate 588 is required for 28S ribosomal RNA processing. Positions leucine 565–glutamate 588 are disordered.

The protein belongs to the pescadillo family. Component of the PeBoW complex, composed of BOP1, PES1 and WDR12. The complex is held together by BOP1, which interacts with PES1 via its N-terminal domain and with WDR12 via a high-affinity interaction between the seven-bladed beta-propeller domains of the 2 proteins. The PeBoW complex associates with the 66S pre-ribosome. The PeBoW complex also associates with DDX27, PES1 interacts directly with DDX27. Interacts with IRS1 and UBTF. May interact with MAP1B. In terms of processing, sumoylated. In terms of tissue distribution, significant levels are detected in a variety of cancer cell lines, including glioblastoma, breast carcinoma, colon carcinoma and cervical carcinoma cells. Levels are abnormally elevated in malignant tumors of astrocytic origin.

The protein localises to the nucleus. Its subcellular location is the nucleolus. The protein resides in the nucleoplasm. It localises to the chromosome. In terms of biological role, component of the PeBoW complex, which is required for maturation of 28S and 5.8S ribosomal RNAs and formation of the 60S ribosome. This chain is Pescadillo homolog, found in Homo sapiens (Human).